We begin with the raw amino-acid sequence, 327 residues long: Clavesin-2 (327 aa).

In terms of domain architecture, CRAL-TRIO spans 96–257 (IKQALKDGFP…EFGGMLPPYD (162 aa)). The tract at residues 288 to 327 (VDKELSPKSMKRSQSVVDPTALKRMDKSEEENMQPLLSLD) is disordered. Position 325 is a phosphoserine (serine 325).

In terms of assembly, forms a complex with clathrin heavy chain and gamma-adaptin. In terms of tissue distribution, expressed in brain with no expression detected in non-neuronal tissues (at protein level).

It localises to the golgi apparatus. It is found in the trans-Golgi network membrane. The protein localises to the early endosome membrane. Its subcellular location is the cytoplasmic vesicle. The protein resides in the clathrin-coated vesicle. Functionally, required for normal morphology of late endosomes and/or lysosomes in neurons. Binds phosphatidylinositol 3,5-bisphosphate (PtdIns(3,5)P2). The chain is Clavesin-2 from Rattus norvegicus (Rat).